The following is a 362-amino-acid chain: Putative F-box protein At3g25750 (362 aa).

The 49-residue stretch at threonine 4–phenylalanine 52 folds into the F-box domain.

The sequence is that of Putative F-box protein At3g25750 from Arabidopsis thaliana (Mouse-ear cress).